The sequence spans 65 residues: Large ribosomal subunit protein bL35 (65 aa).

This sequence belongs to the bacterial ribosomal protein bL35 family.

The protein is Large ribosomal subunit protein bL35 of Chromobacterium violaceum (strain ATCC 12472 / DSM 30191 / JCM 1249 / CCUG 213 / NBRC 12614 / NCIMB 9131 / NCTC 9757 / MK).